The following is an 80-amino-acid chain: Conotoxin Ca11.3 (80 aa).

Residues 1 to 19 (MKLVLAIVVILMLLSLSTG) form the signal peptide. Residues 20-42 (AEMSDNHASRSATALRDRLLSPK) constitute a propeptide that is removed on maturation. Disulfide bonds link Cys-46-Cys-60, Cys-53-Cys-65, Cys-59-Cys-72, and Cys-64-Cys-79.

This sequence belongs to the conotoxin I3 superfamily. Expressed by the venom duct.

The protein localises to the secreted. This chain is Conotoxin Ca11.3, found in Conus caracteristicus (Characteristic cone).